The following is a 544-amino-acid chain: Chaperonin GroEL 2 (544 aa).

ATP-binding positions include 29 to 32 (TLGP), 86 to 90 (DGTTT), glycine 413, 479 to 481 (NAA), and aspartate 495.

The protein belongs to the chaperonin (HSP60) family. Forms a cylinder of 14 subunits composed of two heptameric rings stacked back-to-back. Interacts with the co-chaperonin GroES.

It is found in the cytoplasm. It carries out the reaction ATP + H2O + a folded polypeptide = ADP + phosphate + an unfolded polypeptide.. Its function is as follows. Together with its co-chaperonin GroES, plays an essential role in assisting protein folding. The GroEL-GroES system forms a nano-cage that allows encapsulation of the non-native substrate proteins and provides a physical environment optimized to promote and accelerate protein folding. In Prochlorococcus marinus subsp. pastoris (strain CCMP1986 / NIES-2087 / MED4), this protein is Chaperonin GroEL 2.